The sequence spans 205 residues: uncharacterized protein (205 aa).

Residues 1 to 42 (MSRKRDKPYTNRHTPARISKRRRPWAPSSSEHDEIIDKPITK) are disordered. Residues 14 to 24 (TPARISKRRRP) show a composition bias toward basic residues. A compositionally biased stretch (basic and acidic residues) spans 30–40 (SEHDEIIDKPI). One can recognise an RRM domain in the interval 47 to 122 (PALVVMGLPA…KKLEVVWATD (76 aa)). Residues 170 to 191 (PRSDNTKGISGDGGISSPATTS) are disordered.

This is an uncharacterized protein from Arabidopsis thaliana (Mouse-ear cress).